Here is an 82-residue protein sequence, read N- to C-terminus: Small ribosomal subunit protein bS16 (82 aa).

The protein belongs to the bacterial ribosomal protein bS16 family.

The sequence is that of Small ribosomal subunit protein bS16 from Actinobacillus succinogenes (strain ATCC 55618 / DSM 22257 / CCUG 43843 / 130Z).